The chain runs to 544 residues: Phenylalanine--tRNA ligase beta subunit (544 aa).

The 76-residue stretch at 268 to 343 (LIHKIQNVRE…MSIGYNNLEP (76 aa)) folds into the B5 domain. Positions 321, 327, 330, and 331 each coordinate Mg(2+).

It belongs to the phenylalanyl-tRNA synthetase beta subunit family. Type 2 subfamily. In terms of assembly, tetramer of two alpha and two beta subunits. Mg(2+) is required as a cofactor.

The protein localises to the cytoplasm. It carries out the reaction tRNA(Phe) + L-phenylalanine + ATP = L-phenylalanyl-tRNA(Phe) + AMP + diphosphate + H(+). The sequence is that of Phenylalanine--tRNA ligase beta subunit from Saccharolobus solfataricus (strain ATCC 35092 / DSM 1617 / JCM 11322 / P2) (Sulfolobus solfataricus).